The following is a 146-amino-acid chain: Protein phosphatase 1 regulatory subunit 14D (146 aa).

Polar residues predominate over residues 1-16; sequence MLSSSAASCTSPNPDT. Residues 1 to 57 are disordered; the sequence is MLSSSAASCTSPNPDTDNPDKKVRWSSEKRRRASSTDSESKTHLDISKLPRSRRPSR. 2 stretches are compositionally biased toward basic and acidic residues: residues 18-28 and 38-48; these read NPDKKVRWSSE and SESKTHLDISK. Positions 21-25 are interaction with protein phosphatase 1; sequence KKVRW.

The protein belongs to the PP1 inhibitor family. In terms of processing, phosphorylated on several residues.

It is found in the cytoplasm. Inhibitor of PPP1CA. Has inhibitory activity only when phosphorylated, creating a molecular switch for regulating the phosphorylation status of PPP1CA substrates and smooth muscle contraction. The chain is Protein phosphatase 1 regulatory subunit 14D (Ppp1r14d) from Rattus norvegicus (Rat).